Consider the following 251-residue polypeptide: B3 domain-containing protein At2g24670 (251 aa).

Positions 48-111 are disordered; it reads TTPSTVMESK…SSKTREPTPG (64 aa). Residues 56–70 show a composition bias toward basic and acidic residues; sequence SKSHIHDHSLRESPT. Residues 153-249 constitute a DNA-binding region (TF-B3); that stretch reads VSQIVELEFL…TLYFALVPLY (97 aa).

The protein localises to the nucleus. This Arabidopsis thaliana (Mouse-ear cress) protein is B3 domain-containing protein At2g24670.